The sequence spans 632 residues: MTTNYSAQEITVLKDLEPVQIRPGMYTDTTRPNHLAQEVIDNSVDEALAGFATKIEVILHPDQSIEVTDNGRGMPVDIHPTEGVSGVEVILTKLHAGGKFSNKNYEFAGGLHGVGISVVNALSERVDIQVKRNGEIYKIAFENGSKVEELEIIGTCGRRTTGTIVHFKPNPKYFDSAKFSVSRLRHLLRAKAVLCSGLEIKFIDKVNNTQDIWLYEDGLSDYLIEAVNGFETLPKKPFVGEFKGANEAVSWALLWLPEGGELIGESYVNLIPTIQGGTHVNGLRQGLLDAIREFCEFRNLLPRGVKLTADDIWDRCSYILSLKMQDAQFAGQTKERLSSRQSAVFVSGVLKDAFSLWLNQNVQDAEKLAEIAISSAQRRLRAAKKVVRKKLVSGPALPGKLADCGSQDLEKTELFLVEGDSAGGSAKQARDREYQAILPLRGKILNTWEVSPDQVLGSTEIHDIAVALGIDPDSNDLSQLRYGKVCILADADSDGLHIATLLCALFLRHFPKLVQDGHVYVAMPPLYRIDLNKEVFYALDENEKEAILDRLKNKKGKPNVQRFKGLGEMNPSQLRETTMDPNTRRLVQLTYDLGEDQGSDTLELMDMLLAKKRSEDRKNWLQAKGDQVDLSV.

ATP contacts are provided by residues Y5, N42, D69, 110-116 (GLHGVGI), and K334. Positions 412-525 (TELFLVEGDS…DGHVYVAMPP (114 aa)) constitute a Toprim domain. E418, D490, and D492 together coordinate Mg(2+).

This sequence belongs to the type II topoisomerase family. ParE type 1 subfamily. Heterotetramer composed of ParC and ParE. The cofactor is Mg(2+). Requires Mn(2+) as cofactor. Ca(2+) is required as a cofactor.

It catalyses the reaction ATP-dependent breakage, passage and rejoining of double-stranded DNA.. Functionally, topoisomerase IV is essential for chromosome segregation. It relaxes supercoiled DNA. Performs the decatenation events required during the replication of a circular DNA molecule. This is DNA topoisomerase 4 subunit B from Haemophilus influenzae (strain ATCC 51907 / DSM 11121 / KW20 / Rd).